Here is a 456-residue protein sequence, read N- to C-terminus: tRNA-2-methylthio-N(6)-dimethylallyladenosine synthase (456 aa).

One can recognise an MTTase N-terminal domain in the interval Lys-2 to Arg-119. 6 residues coordinate [4Fe-4S] cluster: Cys-11, Cys-48, Cys-82, Cys-156, Cys-160, and Cys-163. The Radical SAM core domain maps to Arg-142–Arg-375. In terms of domain architecture, TRAM spans Gln-378–Glu-448.

It belongs to the methylthiotransferase family. MiaB subfamily. In terms of assembly, monomer. It depends on [4Fe-4S] cluster as a cofactor.

The protein localises to the cytoplasm. The enzyme catalyses N(6)-dimethylallyladenosine(37) in tRNA + (sulfur carrier)-SH + AH2 + 2 S-adenosyl-L-methionine = 2-methylsulfanyl-N(6)-dimethylallyladenosine(37) in tRNA + (sulfur carrier)-H + 5'-deoxyadenosine + L-methionine + A + S-adenosyl-L-homocysteine + 2 H(+). In terms of biological role, catalyzes the methylthiolation of N6-(dimethylallyl)adenosine (i(6)A), leading to the formation of 2-methylthio-N6-(dimethylallyl)adenosine (ms(2)i(6)A) at position 37 in tRNAs that read codons beginning with uridine. The sequence is that of tRNA-2-methylthio-N(6)-dimethylallyladenosine synthase from Ralstonia pickettii (strain 12J).